Here is a 518-residue protein sequence, read N- to C-terminus: Putative BTB/POZ domain and WD-repeat protein R731 (518 aa).

Residues 22–92 (TDCQLHLTDS…FYGFPLEEPN (71 aa)) form the BTB domain. A disordered region spans residues 224-246 (NHEESSDDEVNDDEDTDNEDTDD). The segment covering 228-246 (SSDDEVNDDEDTDNEDTDD) has biased composition (acidic residues). WD repeat units lie at residues 391–430 (NHST…SLIK) and 437–475 (FLKF…IIQN).

Belongs to the mimivirus BTB/WD family.

This Acanthamoeba polyphaga (Amoeba) protein is Putative BTB/POZ domain and WD-repeat protein R731.